A 155-amino-acid polypeptide reads, in one-letter code: Myosin light chain alkali (155 aa).

EF-hand domains are found at residues 7–41 and 80–115; these read REVE…LNLN and GCYE…LGES.

In terms of assembly, myosin is a hexamer of 2 heavy chains and 4 light chains.

In Drosophila virilis (Fruit fly), this protein is Myosin light chain alkali (Mlc1).